A 1373-amino-acid chain; its full sequence is DNA-directed RNA polymerase subunit beta (1373 aa).

It belongs to the RNA polymerase beta chain family. As to quaternary structure, the RNAP catalytic core consists of 2 alpha, 1 beta, 1 beta' and 1 omega subunit. When a sigma factor is associated with the core the holoenzyme is formed, which can initiate transcription.

The catalysed reaction is RNA(n) + a ribonucleoside 5'-triphosphate = RNA(n+1) + diphosphate. DNA-dependent RNA polymerase catalyzes the transcription of DNA into RNA using the four ribonucleoside triphosphates as substrates. The chain is DNA-directed RNA polymerase subunit beta from Rickettsia canadensis (strain McKiel).